A 29-amino-acid chain; its full sequence is Chassatide C10 (29 aa).

The segment at residues 1 to 29 (GEYCGESCYLIPCFTPGCYCVSRQCVNKN) is a cross-link (cyclopeptide (Gly-Asn)). Intrachain disulfides connect cysteine 4–cysteine 18, cysteine 8–cysteine 20, and cysteine 13–cysteine 25.

Post-translationally, this is a cyclic peptide.

Probably participates in a plant defense mechanism. Has no activity against bacteria up to a concentration of 80 uM. Has cytotoxic but no hemolytic activity. This Chassalia chartacea (Chassalia curviflora) protein is Chassatide C10.